Consider the following 176-residue polypeptide: ATP-dependent protease subunit HslV (176 aa).

T2 is a catalytic residue. A157, C160, and T163 together coordinate Na(+).

This sequence belongs to the peptidase T1B family. HslV subfamily. A double ring-shaped homohexamer of HslV is capped on each side by a ring-shaped HslU homohexamer. The assembly of the HslU/HslV complex is dependent on binding of ATP.

It is found in the cytoplasm. The catalysed reaction is ATP-dependent cleavage of peptide bonds with broad specificity.. With respect to regulation, allosterically activated by HslU binding. In terms of biological role, protease subunit of a proteasome-like degradation complex believed to be a general protein degrading machinery. The chain is ATP-dependent protease subunit HslV from Buchnera aphidicola subsp. Schizaphis graminum (strain Sg).